A 43-amino-acid polypeptide reads, in one-letter code: METATLIAISISGLIVSFTGYALYTAFGQPSQQLRDPFEEHGD.

A helical transmembrane segment spans residues T5–F27.

Belongs to the PsbN family.

It localises to the plastid. The protein resides in the chloroplast thylakoid membrane. May play a role in photosystem I and II biogenesis. In Cicer arietinum (Chickpea), this protein is Protein PsbN.